The chain runs to 484 residues: MYIGIDLGTSGVKVILLNEQGEVVAAQTEKLTVSRPHPLWSEQDPEQWWQATDRAMKALGDQHSLQDVKALGIAGQMHGATLLDAQQRVLRPAILWNDGRCAQECTLLEARVPQSRVITGNLMMPGFTAPKLLWVQRHEPEIFRQIDKVLLPKDYLRLRMTGEFASDMSDAAGTMWLDVAKRDWSDVMLQACDLSRDQMPALYEGSEITGALLPEVAKAWGMATVPVVAGGGDNAAGAVGVGMVDANQAMLSLGTSGVYFAVSEGFLSKPESAVHSFCHALPQRWHLMSVMLSAASCLDWAAKLTGLSNVPALIAAAQQADESAEPVWFLPYLSGERTPHNNPQAKGVFFGLTHQHGPNELARAVLEGVGYALADGMDVVHACGIKPQSVTLIGGGARSEYWRQMLADISGQQLDYRTGGDVGPALGAARLAQIAANPEKSLIELLPQLPLEQSHLPDAQRYAAYQPRRETFRRLYQQLLPLMA.

Position 77–78 (77–78 (MH)) interacts with substrate. The active-site Proton acceptor is the Asp233.

This sequence belongs to the FGGY kinase family. In terms of assembly, homodimer.

The enzyme catalyses D-xylulose + ATP = D-xylulose 5-phosphate + ADP + H(+). The catalysed reaction is 1-deoxy-D-xylulose + ATP = 1-deoxy-D-xylulose 5-phosphate + ADP + H(+). Sugar binding is accompanied by a dramatic hinge-bending movement that enhances interactions with Mg-ATP. Catalyzes the phosphorylation of D-xylulose to D-xylulose 5-phosphate. Also catalyzes the phosphorylation of 1-deoxy-D-xylulose to 1-deoxy-D-xylulose 5-phosphate, with lower efficiency. Can also use D-ribulose, xylitol and D-arabitol, but D-xylulose is preferred over the other substrates. Has a weak substrate-independent Mg-ATP-hydrolyzing activity. The sequence is that of Xylulose kinase from Escherichia coli (strain K12).